Here is a 108-residue protein sequence, read N- to C-terminus: uncharacterized protein (108 aa).

This is an uncharacterized protein from Microplitis demolitor bracovirus (isolate Webb) (MdBV).